We begin with the raw amino-acid sequence, 315 residues long: Protein phosphatase PTC7 homolog fig (315 aa).

One can recognise a PPM-type phosphatase domain in the interval 54 to 309; that stretch reads KHSIASAKDN…DDITVILATV (256 aa). Residues D86, G87, and D231 each coordinate Mn(2+).

It belongs to the PP2C family. Mg(2+) is required as a cofactor. Requires Mn(2+) as cofactor.

The catalysed reaction is O-phospho-L-seryl-[protein] + H2O = L-seryl-[protein] + phosphate. It carries out the reaction O-phospho-L-threonyl-[protein] + H2O = L-threonyl-[protein] + phosphate. The polypeptide is Protein phosphatase PTC7 homolog fig (Drosophila willistoni (Fruit fly)).